The primary structure comprises 253 residues: Ribonuclease HII (253 aa).

An RNase H type-2 domain is found at 30-221; that stretch reads GPVAGVDEVG…VRRLVVDGEP (192 aa). A divalent metal cation is bound by residues Asp-36, Glu-37, and Asp-130.

The protein belongs to the RNase HII family. It depends on Mn(2+) as a cofactor. Requires Mg(2+) as cofactor.

The protein resides in the cytoplasm. It carries out the reaction Endonucleolytic cleavage to 5'-phosphomonoester.. In terms of biological role, endonuclease that specifically degrades the RNA of RNA-DNA hybrids. The chain is Ribonuclease HII from Mycolicibacterium gilvum (strain PYR-GCK) (Mycobacterium gilvum (strain PYR-GCK)).